Here is a 368-residue protein sequence, read N- to C-terminus: MTTPTQKLSDAGVSIWLDDLSRQRLTSGNLQKLIDTENVVGVTTNPTIFAAALADGESYREQVAELAAADTSVDDAVFRITTDDVRDACDLFAPIAEATQGVDGRVSIEVDPRLAQDADATSAMAQKLSQTIDRPNALIKIPATEKGLPSIAATVAEGISVNVTLIFSLERYRGVINAYMEGLERALENGKDLSTIHSVASFFVSRVDTEIDKRLDAVGSSEATALKGKAGLANARLAYQVYEQSLDTERWKRLAAAGANPQRPLWASTGVKDPSLPDTLYVTELVAPNTVNTMPEKTLDATFDHAEVTGDTVTGTYEQSAEVLDAIAEQGVSYQEVVAQLETEGLQKFDASWEELLSTVRAALDAAR.

K140 functions as the Schiff-base intermediate with substrate in the catalytic mechanism.

This sequence belongs to the transaldolase family. Type 2 subfamily.

The protein resides in the cytoplasm. The catalysed reaction is D-sedoheptulose 7-phosphate + D-glyceraldehyde 3-phosphate = D-erythrose 4-phosphate + beta-D-fructose 6-phosphate. The protein operates within carbohydrate degradation; pentose phosphate pathway; D-glyceraldehyde 3-phosphate and beta-D-fructose 6-phosphate from D-ribose 5-phosphate and D-xylulose 5-phosphate (non-oxidative stage): step 2/3. Its function is as follows. Transaldolase is important for the balance of metabolites in the pentose-phosphate pathway. In Kocuria rhizophila (strain ATCC 9341 / DSM 348 / NBRC 103217 / DC2201), this protein is Transaldolase.